The chain runs to 110 residues: Large ribosomal subunit protein uL22 (110 aa).

This sequence belongs to the universal ribosomal protein uL22 family. As to quaternary structure, part of the 50S ribosomal subunit.

Functionally, this protein binds specifically to 23S rRNA; its binding is stimulated by other ribosomal proteins, e.g. L4, L17, and L20. It is important during the early stages of 50S assembly. It makes multiple contacts with different domains of the 23S rRNA in the assembled 50S subunit and ribosome. Its function is as follows. The globular domain of the protein is located near the polypeptide exit tunnel on the outside of the subunit, while an extended beta-hairpin is found that lines the wall of the exit tunnel in the center of the 70S ribosome. The sequence is that of Large ribosomal subunit protein uL22 from Acinetobacter baumannii (strain ACICU).